The chain runs to 398 residues: Cytochrome b (398 aa).

The helical transmembrane segment at 45–65 (LGSIAGIALVIQIITGVILAM) threads the bilayer. Residues His-95 and His-109 each contribute to the heme b site. Helical transmembrane passes span 96 to 116 (AVGA…GLYY), 129 to 149 (IGII…VLPW), 164 to 184 (FSAI…GFSV), 192 to 212 (FFSL…LHLV), 245 to 265 (FVGF…EPNY), 277 to 297 (PLVT…YAIL), 304 to 324 (LGGV…PWLD), 339 to 359 (MAFW…GQPA), and 366 to 386 (ISRF…PLIG). Positions 196 and 210 each coordinate heme b.

Belongs to the cytochrome b family. The main subunits of complex b-c1 are: cytochrome b, cytochrome c1 and the Rieske protein. Heme b is required as a cofactor.

The protein resides in the cell membrane. Functionally, component of the ubiquinol-cytochrome c reductase complex (complex III or cytochrome b-c1 complex), which is a respiratory chain that generates an electrochemical potential coupled to ATP synthesis. This is Cytochrome b (petB) from Rickettsia conorii (strain ATCC VR-613 / Malish 7).